The sequence spans 618 residues: Glucose starvation modulator protein 1 (618 aa).

Positions 20 to 48 form a DNA-binding region, zn(2)-C6 fungal-type; it reads CEFCHTKHIQCDVGRPCQNCLKRNIGKFC. The interval 325–352 is disordered; that stretch reads ANANTHPSHNAKLESECDSSSHSDADLE. Positions 335-352 are enriched in basic and acidic residues; it reads AKLESECDSSSHSDADLE. In terms of domain architecture, PAS spans 466-538; it reads LLDLENMAKL…QIFNELLAFG (73 aa).

It belongs to the ERT1/acuK family.

The protein localises to the nucleus. Functionally, transcription factor which regulates nonfermentable carbon utilization. Binds specifically to 5'-CGGN(8)CGG-3' and 5'-CGGN(9)CGG-3' sequences in the promoter region. This is Glucose starvation modulator protein 1 (GSM1) from Saccharomyces cerevisiae (strain ATCC 204508 / S288c) (Baker's yeast).